The chain runs to 221 residues: Pectate lyase C (221 aa).

The first 27 residues, 1-27 (MKKIVSILFMFGLVMGFSQFQPSTVFA), serve as a signal peptide directing secretion.

It belongs to the polysaccharide lyase 3 family. Ca(2+) serves as cofactor.

It is found in the secreted. It catalyses the reaction Eliminative cleavage of (1-&gt;4)-alpha-D-galacturonan to give oligosaccharides with 4-deoxy-alpha-D-galact-4-enuronosyl groups at their non-reducing ends.. It carries out the reaction Eliminative cleavage of (1-&gt;4)-alpha-D-galacturonan methyl ester to give oligosaccharides with 4-deoxy-6-O-methyl-alpha-D-galact-4-enuronosyl groups at their non-reducing ends.. Its pathway is glycan metabolism; pectin degradation; 2-dehydro-3-deoxy-D-gluconate from pectin: step 2/5. Catalyzes the depolymerization of both polygalacturonate and pectins of methyl esterification degree from 22 to 89%, with an endo mode of action. In contrast to the majority of pectate lyases, displays high activity on highly methylated pectins. Is also able to cleave trigalacturonate to galacturonic acid and unsaturated digalacturonate. The chain is Pectate lyase C (pelC) from Bacillus subtilis (strain 168).